The primary structure comprises 399 residues: UDP-N-acetylglucosamine--N-acetylmuramyl-(pentapeptide) pyrophosphoryl-undecaprenol N-acetylglucosamine transferase (399 aa).

Residues 29–31 (TAG), N148, R185, S219, and Q318 contribute to the UDP-N-acetyl-alpha-D-glucosamine site.

Belongs to the glycosyltransferase 28 family. MurG subfamily.

It is found in the cell membrane. The catalysed reaction is di-trans,octa-cis-undecaprenyl diphospho-N-acetyl-alpha-D-muramoyl-L-alanyl-D-glutamyl-meso-2,6-diaminopimeloyl-D-alanyl-D-alanine + UDP-N-acetyl-alpha-D-glucosamine = di-trans,octa-cis-undecaprenyl diphospho-[N-acetyl-alpha-D-glucosaminyl-(1-&gt;4)]-N-acetyl-alpha-D-muramoyl-L-alanyl-D-glutamyl-meso-2,6-diaminopimeloyl-D-alanyl-D-alanine + UDP + H(+). It participates in cell wall biogenesis; peptidoglycan biosynthesis. Its function is as follows. Cell wall formation. Catalyzes the transfer of a GlcNAc subunit on undecaprenyl-pyrophosphoryl-MurNAc-pentapeptide (lipid intermediate I) to form undecaprenyl-pyrophosphoryl-MurNAc-(pentapeptide)GlcNAc (lipid intermediate II). This Mycobacterium ulcerans (strain Agy99) protein is UDP-N-acetylglucosamine--N-acetylmuramyl-(pentapeptide) pyrophosphoryl-undecaprenol N-acetylglucosamine transferase.